The following is a 481-amino-acid chain: Glutamate--glyoxylate aminotransferase 1 (481 aa).

Lysine 291 bears the N6-(pyridoxal phosphate)lysine mark. Positions 479 to 481 match the Peroxisomal targeting signal motif; the sequence is SKM.

This sequence belongs to the class-I pyridoxal-phosphate-dependent aminotransferase family. Alanine aminotransferase subfamily. As to quaternary structure, homodimer. Pyridoxal 5'-phosphate is required as a cofactor. In terms of processing, the N-terminus is blocked. As to expression, mostly expressed in leaves, and, to a lower extent, in shoots, stems, flowers, seedlings and green siliques.

Its subcellular location is the peroxisome. It catalyses the reaction L-alanine + 2-oxoglutarate = pyruvate + L-glutamate. It carries out the reaction glyoxylate + L-alanine = glycine + pyruvate. The enzyme catalyses glycine + 2-oxoglutarate = glyoxylate + L-glutamate. It functions in the pathway amino-acid biosynthesis; glycine biosynthesis; glycine from glyoxylate: step 1/1. It participates in photosynthesis; C4 acid pathway. The protein operates within amino-acid degradation; L-alanine degradation via transaminase pathway; pyruvate from L-alanine: step 1/1. Functionally, catalyzes the glutamate:glyoxylate (GGT or GGAT), alanine:glyoxylate (AGT), alanine:2-oxoglutarate (AKT) and glutamate:pyruvate (GPT) aminotransferase reactions in peroxisomes. Required for abscisic acid (ABA)- and stress-mediated responses in an H(2)O(2)-dependent manner. Functions as a photorespiratory aminotransferase that modulates amino acid content during photorespiration (GGAT activity); promotes serine, glycine and citrulline metabolism in response to light. The protein is Glutamate--glyoxylate aminotransferase 1 (GGAT1) of Arabidopsis thaliana (Mouse-ear cress).